Consider the following 231-residue polypeptide: Female protein (231 aa).

The N-terminal stretch at 1–19 is a signal peptide; that stretch reads MDKMLLLLGVSILLSEVFA. Residues 24–223 form the Pentraxin (PTX) domain; the sequence is TGKVFVFPRE…YAVIRPRCVA (200 aa). Residue N51 is glycosylated (N-linked (GlcNAc...) asparagine). An intrachain disulfide couples C55 to C114. Residues D77, N78, E155, Q156, D157, and Q167 each coordinate Ca(2+).

It belongs to the pentraxin family. As to quaternary structure, homopentamer. Pentraxin (or pentaxin) have a discoid arrangement of 5 non-covalently bound subunits. The cofactor is Ca(2+).

Its subcellular location is the secreted. This chain is Female protein, found in Nothocricetulus migratorius (Gray dwarf hamster).